A 239-amino-acid polypeptide reads, in one-letter code: Endolytic peptidoglycan transglycosylase RlpA (239 aa).

The N-terminal stretch at 1–25 (MTLTRKTLFLLTAAFGIHSFQTASA) is a signal peptide. In terms of domain architecture, SPOR spans 160-239 (VAENKDIFID…GMVRAVLTAG (80 aa)).

Belongs to the RlpA family.

Functionally, lytic transglycosylase with a strong preference for naked glycan strands that lack stem peptides. This chain is Endolytic peptidoglycan transglycosylase RlpA, found in Neisseria meningitidis serogroup A / serotype 4A (strain DSM 15465 / Z2491).